Here is a 94-residue protein sequence, read N- to C-terminus: Protein canopy homolog 1 (94 aa).

Belongs to the canopy family.

In Mus musculus (Mouse), this protein is Protein canopy homolog 1 (Cnpy1).